The sequence spans 409 residues: NADH-ubiquinone oxidoreductase chain 4 (409 aa).

The next 13 helical transmembrane spans lie at 10–30, 44–64, 76–96, 98–118, 120–140, 160–180, 194–214, 221–241, 245–265, 271–291, 305–325, 353–373, and 389–409; these read LWLF…FLIF, SYSF…IVIS, ILVF…LYMF, ELSM…IEKI, SSYY…FVYF, FFIL…HLWL, LLAG…LGSL, VWIL…VFQS, ALAA…LVFI, ISSV…FYLI, FMSS…VVFL, MFVM…FLIT, and VGFS…SVFY.

Belongs to the complex I subunit 4 family.

The protein resides in the mitochondrion membrane. The enzyme catalyses a ubiquinone + NADH + 5 H(+)(in) = a ubiquinol + NAD(+) + 4 H(+)(out). In terms of biological role, core subunit of the mitochondrial membrane respiratory chain NADH dehydrogenase (Complex I) that is believed to belong to the minimal assembly required for catalysis. Complex I functions in the transfer of electrons from NADH to the respiratory chain. The immediate electron acceptor for the enzyme is believed to be ubiquinone. The chain is NADH-ubiquinone oxidoreductase chain 4 from Caenorhabditis elegans.